A 281-amino-acid polypeptide reads, in one-letter code: Pantothenate synthetase (281 aa).

Residue 30–37 (MGYLHEGH) coordinates ATP. Catalysis depends on His37, which acts as the Proton donor. Gln61 contacts (R)-pantoate. Gln61 contacts beta-alanine. 147–150 (GEKD) contributes to the ATP binding site. A (R)-pantoate-binding site is contributed by Gln153. ATP is bound by residues Ile176 and 184-187 (KSSR).

It belongs to the pantothenate synthetase family. As to quaternary structure, homodimer.

The protein resides in the cytoplasm. It carries out the reaction (R)-pantoate + beta-alanine + ATP = (R)-pantothenate + AMP + diphosphate + H(+). Its pathway is cofactor biosynthesis; (R)-pantothenate biosynthesis; (R)-pantothenate from (R)-pantoate and beta-alanine: step 1/1. In terms of biological role, catalyzes the condensation of pantoate with beta-alanine in an ATP-dependent reaction via a pantoyl-adenylate intermediate. This Clostridium botulinum (strain Loch Maree / Type A3) protein is Pantothenate synthetase.